Reading from the N-terminus, the 609-residue chain is Chaperone protein DnaK (609 aa).

Residue T172 is modified to Phosphothreonine; by autocatalysis. Positions 578–609 (QAQAQQQAGAGGAAKKDENVVDAEFEEVKDDK) are disordered. Residues 597 to 609 (VVDAEFEEVKDDK) are compositionally biased toward acidic residues.

The protein belongs to the heat shock protein 70 family.

In terms of biological role, acts as a chaperone. In Geobacillus sp. (strain WCH70), this protein is Chaperone protein DnaK.